Reading from the N-terminus, the 446-residue chain is Exodeoxyribonuclease 7 large subunit (446 aa).

This sequence belongs to the XseA family. In terms of assembly, heterooligomer composed of large and small subunits.

The protein resides in the cytoplasm. The enzyme catalyses Exonucleolytic cleavage in either 5'- to 3'- or 3'- to 5'-direction to yield nucleoside 5'-phosphates.. In terms of biological role, bidirectionally degrades single-stranded DNA into large acid-insoluble oligonucleotides, which are then degraded further into small acid-soluble oligonucleotides. The sequence is that of Exodeoxyribonuclease 7 large subunit from Streptococcus gordonii (strain Challis / ATCC 35105 / BCRC 15272 / CH1 / DL1 / V288).